Consider the following 225-residue polypeptide: NAD(P)H-quinone oxidoreductase subunit K, chloroplastic (225 aa).

Cys43, Cys44, Cys108, and Cys139 together coordinate [4Fe-4S] cluster.

The protein belongs to the complex I 20 kDa subunit family. As to quaternary structure, NDH is composed of at least 16 different subunits, 5 of which are encoded in the nucleus. Requires [4Fe-4S] cluster as cofactor.

It localises to the plastid. The protein localises to the chloroplast thylakoid membrane. It catalyses the reaction a plastoquinone + NADH + (n+1) H(+)(in) = a plastoquinol + NAD(+) + n H(+)(out). It carries out the reaction a plastoquinone + NADPH + (n+1) H(+)(in) = a plastoquinol + NADP(+) + n H(+)(out). In terms of biological role, NDH shuttles electrons from NAD(P)H:plastoquinone, via FMN and iron-sulfur (Fe-S) centers, to quinones in the photosynthetic chain and possibly in a chloroplast respiratory chain. The immediate electron acceptor for the enzyme in this species is believed to be plastoquinone. Couples the redox reaction to proton translocation, and thus conserves the redox energy in a proton gradient. This chain is NAD(P)H-quinone oxidoreductase subunit K, chloroplastic, found in Lobularia maritima (Sweet alyssum).